We begin with the raw amino-acid sequence, 116 residues long: Large ribosomal subunit protein bL17 (116 aa).

Belongs to the bacterial ribosomal protein bL17 family. As to quaternary structure, part of the 50S ribosomal subunit. Contacts protein L32.

This is Large ribosomal subunit protein bL17 from Nostoc punctiforme (strain ATCC 29133 / PCC 73102).